A 312-amino-acid chain; its full sequence is Phospholipid phosphatase 3 (312 aa).

The Cytoplasmic segment spans residues 1–33; that stretch reads MQSYKYDKAIVPESKNGGSPALNNNPRKGGSKR. Ser19 is subject to Phosphoserine. Residues 34–54 traverse the membrane as a helical segment; the sequence is VLLICLDLFCLFMAALPFLII. Topologically, residues 55-85 are extracellular; the sequence is ETSTIKPYRRGFYCNDESIKYPLKVSETIND. Residues 86 to 106 form a helical membrane-spanning segment; the sequence is AVLCAVGIVIAILRIITGEFY. Over 107 to 123 the chain is Cytoplasmic; the sequence is RIYYLKEKSRSTIQNPY. The Dityrosine basolateral targeting motif signature appears at 109–110; sequence YY. A helical membrane pass occupies residues 124 to 144; it reads VAALYKQVGCFLFGCAISQSF. Residues 145–194 are Extracellular-facing; that stretch reads TDIAKVSIGRLRPHFLSVCDPDFSQINCSEGYIQNYRCRGEDSKVQEARK. A phosphatase sequence motif I region spans residues 149–157; that stretch reads KVSIGRLRP. N-linked (GlcNAc...) asparagine glycosylation occurs at Asn171. The Integrin-binding motif motif lies at 183–185; it reads RGE. The helical transmembrane segment at 195–215 threads the bilayer; the sequence is SFFSGHASFSMFTMLYLVLYL. Positions 197 to 200 are phosphatase sequence motif II; it reads FSGH. The active-site Proton donors is the His200. Topologically, residues 216–226 are cytoplasmic; it reads QARFTWRGARL. Residues 227–244 form a helical membrane-spanning segment; the sequence is LRPLLQFTLLMMAFYTGL. The interval 245 to 256 is phosphatase sequence motif III; it reads SRVSDYKHHPSD. The Extracellular portion of the chain corresponds to 245–258; that stretch reads SRVSDYKHHPSDVL. His252 functions as the Nucleophile in the catalytic mechanism. The helical transmembrane segment at 259 to 279 threads the bilayer; sequence AGFAQGALVACCIVFFVSDLF. Positions 276-312 are mediates interaction with CTNND1; sequence SDLFKTKTTLSLPAPAIRREILSPVDIMDRSNHHNMV. At 280 to 312 the chain is on the cytoplasmic side; the sequence is KTKTTLSLPAPAIRREILSPVDIMDRSNHHNMV.

This sequence belongs to the PA-phosphatase related phosphoesterase family. In terms of assembly, forms functional homodimers and homooligomers that are not required for substrate recognition and catalytic activity. Can also form heterooligomers with other PLPP2 and PLPP3. Interacts with CTNND1; negatively regulates the PLPP3-mediated stabilization of beta-catenin/CTNNB1. In terms of processing, N-glycosylated. Contains high-mannose oligosaccharides. In terms of tissue distribution, detected in epithelial cells of intestinal mucosa, lung, liver and brain.

It is found in the cell membrane. It localises to the basolateral cell membrane. The protein localises to the endoplasmic reticulum membrane. The protein resides in the endoplasmic reticulum-Golgi intermediate compartment membrane. Its subcellular location is the golgi apparatus membrane. It is found in the golgi apparatus. It localises to the trans-Golgi network membrane. The protein localises to the membrane raft. The catalysed reaction is a 1,2-diacyl-sn-glycero-3-phosphate + H2O = a 1,2-diacyl-sn-glycerol + phosphate. It catalyses the reaction 1,2-dihexadecanoyl-sn-glycero-3-phosphate + H2O = 1,2-dihexadecanoyl-sn-glycerol + phosphate. It carries out the reaction 1,2-di-(9Z-octadecenoyl)-sn-glycero-3-phosphate + H2O = 1,2-di-(9Z-octadecenoyl)-sn-glycerol + phosphate. The enzyme catalyses a monoacyl-sn-glycero-3-phosphate + H2O = a monoacylglycerol + phosphate. The catalysed reaction is (9Z)-octadecenoyl-sn-glycero-3-phosphate + H2O = (9Z-octadecenoyl)-glycerol + phosphate. It catalyses the reaction sphing-4-enine 1-phosphate + H2O = sphing-4-enine + phosphate. It carries out the reaction an N-acylsphing-4-enine 1-phosphate + H2O = an N-acylsphing-4-enine + phosphate. The enzyme catalyses N-(octanoyl)-sphing-4-enine-1-phosphate + H2O = N-octanoylsphing-4-enine + phosphate. The catalysed reaction is N-(9Z-octadecenoyl)-ethanolamine phosphate + H2O = N-(9Z-octadecenoyl) ethanolamine + phosphate. It participates in lipid metabolism; phospholipid metabolism. Its activity is regulated as follows. Magnesium-independent phospholipid phosphatase. Insensitive to N-ethylmaleimide. Inhibited by sphingosine, zinc ions and modestly by propanolol. Functionally, magnesium-independent phospholipid phosphatase of the plasma membrane that catalyzes the dephosphorylation of a variety of glycerolipid and sphingolipid phosphate esters including phosphatidate/PA, lysophosphatidate/LPA, diacylglycerol pyrophosphate/DGPP, sphingosine 1-phosphate/S1P and ceramide 1-phosphate/C1P. Also acts on N-oleoyl ethanolamine phosphate/N-(9Z-octadecenoyl)-ethanolamine phosphate, a potential physiological compound. Has both an extracellular and an intracellular phosphatase activity, allowing the hydrolysis and the cellular uptake of these bioactive lipid mediators from the milieu, regulating signal transduction in different cellular processes. Through the dephosphorylation of extracellular sphingosine-1-phosphate and the regulation of its extra- and intracellular availability, plays a role in vascular homeostasis, regulating endothelial cell migration, adhesion, survival, proliferation and the production of pro-inflammatory cytokines. By maintaining the appropriate levels of this lipid in the cerebellum, also ensure its proper development and function. Through its intracellular lipid phosphatase activity may act in early compartments of the secretory pathway, regulating the formation of Golgi to endoplasmic reticulum retrograde transport carriers. In terms of biological role, independently of this phosphatase activity may also function in the Wnt signaling pathway and the stabilization of beta-catenin/CTNNB1, thereby regulating cell proliferation, migration and differentiation in angiogenesis or yet in tumor growth. Also plays a role in integrin-mediated cell-cell adhesion in angiogenesis. The sequence is that of Phospholipid phosphatase 3 from Rattus norvegicus (Rat).